The primary structure comprises 289 residues: 2-hydroxy-6-oxononadienedioate/2-hydroxy-6-oxononatrienedioate hydrolase (289 aa).

H269 serves as the catalytic Proton acceptor.

This sequence belongs to the AB hydrolase superfamily. MhpC family. Homodimer.

The catalysed reaction is (2Z,4E)-2-hydroxy-6-oxonona-2,4-dienedioate + H2O = (2Z)-2-hydroxypenta-2,4-dienoate + succinate + H(+). The enzyme catalyses (2Z,4E,7E)-2-hydroxy-6-oxonona-2,4,7-trienedioate + H2O = (2Z)-2-hydroxypenta-2,4-dienoate + fumarate + H(+). It functions in the pathway aromatic compound metabolism; 3-phenylpropanoate degradation. Functionally, catalyzes the cleavage of the C5-C6 bond of 2-hydroxy-6-oxononadienedioate and 2-hydroxy-6-oxononatrienedioate, a dienol ring fission product of the bacterial meta-cleavage pathway for degradation of phenylpropionic acid. The chain is 2-hydroxy-6-oxononadienedioate/2-hydroxy-6-oxononatrienedioate hydrolase from Cupriavidus pinatubonensis (strain JMP 134 / LMG 1197) (Cupriavidus necator (strain JMP 134)).